The primary structure comprises 815 residues: Serotype-specific mannosyltransferase WbdA (815 aa).

The segment at 1-374 (MSRAIIENAG…WANTAHLAID (374 aa)) is alpha-(1-&gt;2)-mannosyltransferase. Positions 431-804 (KLLVDISVLA…WKQSAELLLK (374 aa)) are alpha-(1-&gt;3)-mannosyltransferase.

The protein belongs to the glycosyltransferase group 1 family. Glycosyltransferase 4 subfamily.

Its subcellular location is the cell inner membrane. It participates in bacterial outer membrane biogenesis; LPS O-antigen biosynthesis. In terms of biological role, mannosyltransferase involved in the biosynthesis of the repeat unit of the lipopolysaccharide (LPS) O-antigen region. In Escherichia coli, this protein is Serotype-specific mannosyltransferase WbdA.